The chain runs to 318 residues: NADH-ubiquinone oxidoreductase chain 1 (318 aa).

8 helical membrane-spanning segments follow: residues 2–22, 70–90, 100–120, 147–167, 172–192, 222–242, 253–273, and 294–314; these read FMIN…FLTL, MFIL…IPLP, LGVL…LWSG, AIIL…TLII, MWLI…TLAE, LFFM…AILF, ELYT…FLWI, and LPLT…TSGI.

This sequence belongs to the complex I subunit 1 family. In terms of assembly, core subunit of respiratory chain NADH dehydrogenase (Complex I) which is composed of 45 different subunits.

The protein resides in the mitochondrion inner membrane. It catalyses the reaction a ubiquinone + NADH + 5 H(+)(in) = a ubiquinol + NAD(+) + 4 H(+)(out). Its function is as follows. Core subunit of the mitochondrial membrane respiratory chain NADH dehydrogenase (Complex I) which catalyzes electron transfer from NADH through the respiratory chain, using ubiquinone as an electron acceptor. Essential for the catalytic activity and assembly of complex I. In Bos indicus (Zebu), this protein is NADH-ubiquinone oxidoreductase chain 1 (MT-ND1).